A 360-amino-acid polypeptide reads, in one-letter code: Phospho-N-acetylmuramoyl-pentapeptide-transferase (360 aa).

10 helical membrane passes run 25-45 (RGIL…PWMI), 73-93 (TMGG…WADL), 97-117 (YVWV…VDDY), 134-154 (YFWQ…TAPT), 168-188 (LAIP…VGSS), 199-219 (GLAI…CYLS), 236-256 (AGEL…FLWF), 263-283 (VFMG…IAVI), 288-308 (VVLF…VIQV), and 338-358 (VIVR…ATLK).

It belongs to the glycosyltransferase 4 family. MraY subfamily. Requires Mg(2+) as cofactor.

The protein localises to the cell inner membrane. It catalyses the reaction UDP-N-acetyl-alpha-D-muramoyl-L-alanyl-gamma-D-glutamyl-meso-2,6-diaminopimeloyl-D-alanyl-D-alanine + di-trans,octa-cis-undecaprenyl phosphate = di-trans,octa-cis-undecaprenyl diphospho-N-acetyl-alpha-D-muramoyl-L-alanyl-D-glutamyl-meso-2,6-diaminopimeloyl-D-alanyl-D-alanine + UMP. The protein operates within cell wall biogenesis; peptidoglycan biosynthesis. Catalyzes the initial step of the lipid cycle reactions in the biosynthesis of the cell wall peptidoglycan: transfers peptidoglycan precursor phospho-MurNAc-pentapeptide from UDP-MurNAc-pentapeptide onto the lipid carrier undecaprenyl phosphate, yielding undecaprenyl-pyrophosphoryl-MurNAc-pentapeptide, known as lipid I. This Pseudomonas entomophila (strain L48) protein is Phospho-N-acetylmuramoyl-pentapeptide-transferase.